The following is a 132-amino-acid chain: Lectin OAA (132 aa).

A run of 2 repeats spans residues 1 to 66 (ALYN…TLLG) and 67 to 132 (NNSY…GTTL). Residues 1–132 (ALYNVENQWG…GPIGFKGTTL (132 aa)) form a 2 X approximate tandem repeats region.

In terms of assembly, monomer.

Functionally, lectin specific for high mannose N-glycans, recognizes the branched moiety of these glycans. Does not recognize other types of N-glycans or monosaccharides. Agglutinates trypsin-treated rabbit erythrocytes. Does not require divalent cations for activity. Inhibits HIV replication in MT4 cells with an EC(50) of 45 nM. Binds to the HIV envelope glycoprotein gp120. The sequence is that of Lectin OAA from Planktothrix agardhii (Oscillatoria agardhii).